The following is a 158-amino-acid chain: uncharacterized protein (158 aa).

Residues 13–110 (ESVGRALELV…WGDEYLPRPE (98 aa)) enclose the HTH hxlR-type domain.

This is an uncharacterized protein from Mycobacterium tuberculosis (strain CDC 1551 / Oshkosh).